The chain runs to 303 residues: Signal recognition particle receptor FtsY (303 aa).

Residues 108–115 (GVNGVGKT), 190–194 (DTAGR), and 254–257 (TKLD) contribute to the GTP site.

This sequence belongs to the GTP-binding SRP family. FtsY subfamily. Part of the signal recognition particle protein translocation system, which is composed of SRP and FtsY. SRP is a ribonucleoprotein composed of Ffh and a 4.5S RNA molecule.

The protein resides in the cell inner membrane. The protein localises to the cytoplasm. The catalysed reaction is GTP + H2O = GDP + phosphate + H(+). Functionally, involved in targeting and insertion of nascent membrane proteins into the cytoplasmic membrane. Acts as a receptor for the complex formed by the signal recognition particle (SRP) and the ribosome-nascent chain (RNC). Interaction with SRP-RNC leads to the transfer of the RNC complex to the Sec translocase for insertion into the membrane, the hydrolysis of GTP by both Ffh and FtsY, and the dissociation of the SRP-FtsY complex into the individual components. This Rickettsia typhi (strain ATCC VR-144 / Wilmington) protein is Signal recognition particle receptor FtsY.